Consider the following 331-residue polypeptide: Glycerol-3-phosphate dehydrogenase [NAD(P)+] (331 aa).

NADPH-binding residues include serine 11, phenylalanine 12, arginine 32, and lysine 106. The sn-glycerol 3-phosphate site is built by lysine 106, glycine 134, and serine 136. Residue alanine 138 participates in NADPH binding. Sn-glycerol 3-phosphate-binding residues include lysine 189, aspartate 242, serine 252, arginine 253, and asparagine 254. The Proton acceptor role is filled by lysine 189. Arginine 253 contributes to the NADPH binding site. NADPH contacts are provided by valine 277 and glutamate 279.

It belongs to the NAD-dependent glycerol-3-phosphate dehydrogenase family.

It localises to the cytoplasm. It catalyses the reaction sn-glycerol 3-phosphate + NAD(+) = dihydroxyacetone phosphate + NADH + H(+). The enzyme catalyses sn-glycerol 3-phosphate + NADP(+) = dihydroxyacetone phosphate + NADPH + H(+). Its pathway is membrane lipid metabolism; glycerophospholipid metabolism. Catalyzes the reduction of the glycolytic intermediate dihydroxyacetone phosphate (DHAP) to sn-glycerol 3-phosphate (G3P), the key precursor for phospholipid synthesis. The protein is Glycerol-3-phosphate dehydrogenase [NAD(P)+] of Clostridium perfringens (strain ATCC 13124 / DSM 756 / JCM 1290 / NCIMB 6125 / NCTC 8237 / Type A).